The chain runs to 235 residues: Zein-alpha PMS1 (235 aa).

Residues 1 to 21 (MAAKIFCLLMLLGLSASAATA) form the signal peptide.

This sequence belongs to the zein family.

Functionally, zeins are major seed storage proteins. The chain is Zein-alpha PMS1 (ZMPMS1) from Zea mays (Maize).